We begin with the raw amino-acid sequence, 226 residues long: Probable proteasome subunit beta type-7 (226 aa).

This sequence belongs to the peptidase T1B family. As to quaternary structure, the 26S proteasome consists of a 20S proteasome core and two 19S regulatory subunits. The 20S proteasome core is composed of 28 subunits that are arranged in four stacked rings, resulting in a barrel-shaped structure. The two end rings are each formed by seven alpha subunits, and the two central rings are each formed by seven beta subunits. The catalytic chamber with the active sites is on the inside of the barrel.

It localises to the cytoplasm. It is found in the nucleus. Non-catalytic component of the proteasome which degrades poly-ubiquitinated proteins in the cytoplasm and in the nucleus. It is essential for the regulated turnover of proteins and for the removal of misfolded proteins. The proteasome is a multicatalytic proteinase complex that is characterized by its ability to cleave peptides with Arg, Phe, Tyr, Leu, and Glu adjacent to the leaving group at neutral or slightly basic pH. It has an ATP-dependent proteolytic activity. The chain is Probable proteasome subunit beta type-7 (PRE4) from Encephalitozoon cuniculi (strain GB-M1) (Microsporidian parasite).